A 208-amino-acid polypeptide reads, in one-letter code: Endo-1,4-beta-xylanase B (208 aa).

The N-terminal stretch at 1-16 (MKVTAAFAGLLATTLA) is a signal peptide. A GH11 domain is found at 17–207 (APATELVTRS…GTGTASVTVS (191 aa)). E101 serves as the catalytic Nucleophile. E194 (proton donor) is an active-site residue.

This sequence belongs to the glycosyl hydrolase 11 (cellulase G) family.

Its subcellular location is the secreted. It catalyses the reaction Endohydrolysis of (1-&gt;4)-beta-D-xylosidic linkages in xylans.. Its pathway is glycan degradation; xylan degradation. Its activity is regulated as follows. N-bromosuccinimide completely inhibits the catalytic activity. Endo-1,4-beta-xylanase involved in the hydrolysis of xylan, a major structural heterogeneous polysaccharide found in plant biomass representing the second most abundant polysaccharide in the biosphere, after cellulose. In Talaromyces purpureogenus (Soft rot fungus), this protein is Endo-1,4-beta-xylanase B (xynB).